Reading from the N-terminus, the 962-residue chain is Phosphatidylinositol 3,4,5-trisphosphate 3-phosphatase and dual-specificity protein phosphatase daf-18 (962 aa).

The segment at 1-37 is disordered; the sequence is MVTPPPDVPSTSTRSMARDLQENPNRQPGEPRVSEPY. In terms of domain architecture, Phosphatase tensin-type spans 58 to 230; the sequence is CRTEYQNIDL…YYYHKLRERE (173 aa). C169 serves as the catalytic Phosphocysteine intermediate. Residues 234–530 enclose the C2 tensin-type domain; sequence LPLRMQLIGV…GMKLHVVLRC (297 aa). 2 disordered regions span residues 382-416 and 689-731; these read DTSI…WQIV and IENT…RLPD. Basic and acidic residues predominate over residues 392-403; sequence RRNETPMRKIDP. Positions 692-704 are enriched in low complexity; the sequence is TGPSTSGSSAPGT. Over residues 706 to 720 the composition is skewed to basic and acidic residues; sequence KKTEASQSDKVKPAT.

Belongs to the PTEN phosphatase protein family. As to quaternary structure, interacts (via C-terminus) with vab-1 (via kinase domain); the interaction is independent of vab-1 kinase activity. Interacts with arr-1 and mpz-1; the interaction may inhibit daf-18. Interacts (via C-terminus) with daf-2 (via kinase domain). Post-translationally, phosphorylated by vab-1 on tyrosine residues which may promote daf-18 degradation. Expressed in embryo, larvae and in adult germline (at protein level). Expressed at equal levels in the 6 vulva precursor cells (VPCs) of L2 larvae and in the descendant cells of the induced VPCs (at protein level). Expressed in the uterus (at protein level). Expressed in the Z2/Z3 germline precursors, oocytes, several amphid neurons and weakly in the nerve cord (at protein level).

Its subcellular location is the perikaryon. The protein resides in the cell membrane. It is found in the cell projection. It localises to the axon. The protein localises to the dendrite. Its subcellular location is the cytoplasm. The protein resides in the nucleus. It carries out the reaction a 1,2-diacyl-sn-glycero-3-phospho-(1D-myo-inositol-3,4,5-trisphosphate) + H2O = a 1,2-diacyl-sn-glycero-3-phospho-(1D-myo-inositol-4,5-bisphosphate) + phosphate. The enzyme catalyses O-phospho-L-seryl-[protein] + H2O = L-seryl-[protein] + phosphate. It catalyses the reaction O-phospho-L-threonyl-[protein] + H2O = L-threonyl-[protein] + phosphate. The catalysed reaction is O-phospho-L-tyrosyl-[protein] + H2O = L-tyrosyl-[protein] + phosphate. It carries out the reaction 1,2-dioctanoyl-sn-glycero-3-phospho-(1D-myo-inositol-3,4,5-trisphosphate) + H2O = 1,2-dioctanoyl-sn-glycero-3-phospho-(1D-myo-inositol-4,5-bisphosphate) + phosphate. The enzyme catalyses 1,2-dihexadecanoyl-sn-glycero-3-phospho-(1D-myo-inositol-3,4,5-trisphosphate) + H2O = 1,2-dihexadecanoyl-sn-glycero-3-phospho-(1D-myo-inositol-4,5-bisphosphate) + phosphate. In terms of biological role, acts as a dual-specificity protein phosphatase, dephosphorylating tyrosine-, serine- and threonine-phosphorylated proteins. Also acts as a lipid phosphatase, removing the phosphate in the D3 position of the inositol ring from phosphatidylinositol 3,4,5-trisphosphate. By dephosphorylating PtdIns(3,4,5)P3 antagonizes PtdIns(3,4,5)P3 production by age-1/PI3K and thus, negatively regulates daf-2-mediated processes including dauer formation, longevity, fat metabolism, chemotaxis towards salt, thermotolerance and axon guidance. Similarly, promotes apoptosis during embryonic development by suppressing the recruitment of the prosurvival kinases akt-1/2 to the plasma membrane. In addition, regulates Z2/Z3 germline precursor cell cycle by maintaining them arrested at the G2 stage and by controlling their growth during L1 diapause. After sperm depletion in larvae and adult hermaphrodites, promotes germline stem cell quiescence and oocyte accumulation. By dephosphorylating ephrin-like receptor vab-1 on tyrosine residues, negatively regulates oocyte maturation downstream of vab-1 and upstream of mpk-1, independently of daf-2. Plays a role in postembryonic muscle arm extensions. Required for neurite outgrowth during AIY interneuron embryonic development. Mainly independently of daf-2, negatively regulates vulva induction probably by inhibiting mpk-1 phosphorylation. Both lipid and protein phosphatase activities are required for the regulation of vulva induction. Plays a role in gonad and germline development following the L1 diapause. This is Phosphatidylinositol 3,4,5-trisphosphate 3-phosphatase and dual-specificity protein phosphatase daf-18 from Caenorhabditis elegans.